Reading from the N-terminus, the 1073-residue chain is Transmembrane protein 132E (1073 aa).

Positions 1–33 (MGHFVVQGDLPWILCSLRLVIMIIAGKVSPTSS) are cleaved as a signal peptide. At 34–899 (DALFSVPVPS…MTDLEIGMYA (866 aa)) the chain is on the extracellular side. Residue Asn-102 is glycosylated (N-linked (GlcNAc...) asparagine). Residues 246 to 270 (DPDSNDECGESYPRRGGPSRGESLS) form a disordered region. 3 N-linked (GlcNAc...) asparagine glycosylation sites follow: Asn-324, Asn-396, and Asn-746. The helical transmembrane segment at 900-920 (LLGVFCLAILVFLINCIVFVL) threads the bilayer. Topologically, residues 921 to 1073 (KYRHKRIPPE…DYMRRIKEIA (153 aa)) are cytoplasmic. Positions 952 to 970 (TQSDLSPQTVESPSNTLEG) are enriched in polar residues. Positions 952–1024 (TQSDLSPQTV…PTSKRKRVKF (73 aa)) are disordered. A compositionally biased stretch (low complexity) spans 982–994 (SGSSQTSVQSQVH).

Belongs to the TMEM132 family.

It is found in the membrane. Its function is as follows. Required for normal inner ear hair cell function and hearing. The sequence is that of Transmembrane protein 132E (tmem132e) from Danio rerio (Zebrafish).